The following is an 880-amino-acid chain: Nonsense-mediated mRNA decay factor SMG7-like (880 aa).

TPR repeat units lie at residues 149–183 (QEQY…NPHN) and 184–217 (QLAV…GASN). The interval 669–711 (RLGLSKPNGLGPIDETGPVSAFDSLSINSSTEHPASSYSPPTP) is disordered. Residues 691-701 (DSLSINSSTEH) are compositionally biased toward polar residues.

Functionally, may play a role in growth and development. The protein is Nonsense-mediated mRNA decay factor SMG7-like of Arabidopsis thaliana (Mouse-ear cress).